Consider the following 354-residue polypeptide: S-adenosylmethionine:tRNA ribosyltransferase-isomerase (354 aa).

This sequence belongs to the QueA family. Monomer.

It localises to the cytoplasm. The catalysed reaction is 7-aminomethyl-7-carbaguanosine(34) in tRNA + S-adenosyl-L-methionine = epoxyqueuosine(34) in tRNA + adenine + L-methionine + 2 H(+). It participates in tRNA modification; tRNA-queuosine biosynthesis. Transfers and isomerizes the ribose moiety from AdoMet to the 7-aminomethyl group of 7-deazaguanine (preQ1-tRNA) to give epoxyqueuosine (oQ-tRNA). The polypeptide is S-adenosylmethionine:tRNA ribosyltransferase-isomerase (Dichelobacter nodosus (strain VCS1703A)).